The following is a 507-amino-acid chain: UDP-N-acetylglucosamine 1-carboxyvinyltransferase 1 (507 aa).

Residue Lys41–Asn42 coordinates phosphoenolpyruvate. Arg112 is a binding site for UDP-N-acetyl-alpha-D-glucosamine. Cys136 (proton donor) is an active-site residue. 2-(S-cysteinyl)pyruvic acid O-phosphothioketal is present on Cys136. UDP-N-acetyl-alpha-D-glucosamine-binding positions include Arg141–Leu145, Asp328, and Leu350.

It belongs to the EPSP synthase family. MurA subfamily.

The protein resides in the cytoplasm. It carries out the reaction phosphoenolpyruvate + UDP-N-acetyl-alpha-D-glucosamine = UDP-N-acetyl-3-O-(1-carboxyvinyl)-alpha-D-glucosamine + phosphate. The protein operates within cell wall biogenesis; peptidoglycan biosynthesis. Functionally, cell wall formation. Adds enolpyruvyl to UDP-N-acetylglucosamine. In Legionella pneumophila (strain Lens), this protein is UDP-N-acetylglucosamine 1-carboxyvinyltransferase 1.